Here is an 873-residue protein sequence, read N- to C-terminus: Alanine--tRNA ligase (873 aa).

Positions 559, 563, 661, and 665 each coordinate Zn(2+).

Belongs to the class-II aminoacyl-tRNA synthetase family. Requires Zn(2+) as cofactor.

It is found in the cytoplasm. The enzyme catalyses tRNA(Ala) + L-alanine + ATP = L-alanyl-tRNA(Ala) + AMP + diphosphate. Its function is as follows. Catalyzes the attachment of alanine to tRNA(Ala) in a two-step reaction: alanine is first activated by ATP to form Ala-AMP and then transferred to the acceptor end of tRNA(Ala). Also edits incorrectly charged Ser-tRNA(Ala) and Gly-tRNA(Ala) via its editing domain. The sequence is that of Alanine--tRNA ligase from Acaryochloris marina (strain MBIC 11017).